A 549-amino-acid chain; its full sequence is Cytoplasmic trehalase (549 aa).

Residues Arg-168, 175–176 (WD), Asn-212, 221–223 (RSQ), 292–294 (RDE), and Gly-324 each bind substrate. Active-site proton donor/acceptor residues include Asp-326 and Glu-509. Position 525 (Glu-525) interacts with substrate.

The protein belongs to the glycosyl hydrolase 37 family. In terms of assembly, monomer.

The protein localises to the cytoplasm. The catalysed reaction is alpha,alpha-trehalose + H2O = alpha-D-glucose + beta-D-glucose. Its pathway is glycan degradation; trehalose degradation; D-glucose from alpha,alpha-trehalose: step 1/1. In terms of biological role, hydrolyzes trehalose to glucose. Could be involved, in cells returning to low osmolarity conditions, in the utilization of the accumulated cytoplasmic trehalose, which was synthesized in response to high osmolarity. This Escherichia coli O81 (strain ED1a) protein is Cytoplasmic trehalase.